The primary structure comprises 491 residues: Chromosomal replication initiator protein DnaA (491 aa).

A domain I, interacts with DnaA modulators region spans residues M1–E86. Residues E86–T150 are domain II. The tract at residues S151–A367 is domain III, AAA+ region. Residues G195, G197, K198, and T199 each contribute to the ATP site. Positions S368–H491 are domain IV, binds dsDNA.

It belongs to the DnaA family. As to quaternary structure, oligomerizes as a right-handed, spiral filament on DNA at oriC.

The protein resides in the cytoplasm. Its function is as follows. Plays an essential role in the initiation and regulation of chromosomal replication. ATP-DnaA binds to the origin of replication (oriC) to initiate formation of the DNA replication initiation complex once per cell cycle. Binds the DnaA box (a 9 base pair repeat at the origin) and separates the double-stranded (ds)DNA. Forms a right-handed helical filament on oriC DNA; dsDNA binds to the exterior of the filament while single-stranded (ss)DNA is stabiized in the filament's interior. The ATP-DnaA-oriC complex binds and stabilizes one strand of the AT-rich DNA unwinding element (DUE), permitting loading of DNA polymerase. After initiation quickly degrades to an ADP-DnaA complex that is not apt for DNA replication. Binds acidic phospholipids. The sequence is that of Chromosomal replication initiator protein DnaA from Mycobacteroides abscessus (strain ATCC 19977 / DSM 44196 / CCUG 20993 / CIP 104536 / JCM 13569 / NCTC 13031 / TMC 1543 / L948) (Mycobacterium abscessus).